Here is a 212-residue protein sequence, read N- to C-terminus: uncharacterized protein (212 aa).

The N-terminal stretch at Met1 to Ala20 is a signal peptide.

Its subcellular location is the virion. This is an uncharacterized protein from Acanthamoeba polyphaga (Amoeba).